A 141-amino-acid polypeptide reads, in one-letter code: VLSPDDKKHVKDAWGKVGEHAGQYGAEALERMFLSFPTTKTYFPHFDLSHGSDQVKKHGKKVADALTLAVGHVDDMPQALSKLSDLHAHKLRVDPVNFKLLSHCLLVTLAAHLPAEFTPAVHASLDKFLASVSTVLTSKYR.

The 141-residue stretch at 1 to 141 folds into the Globin domain; it reads VLSPDDKKHV…VSTVLTSKYR (141 aa). Phosphoserine is present on S3. K7 and K11 each carry N6-succinyllysine. K16 carries the N6-acetyllysine; alternate modification. K16 bears the N6-succinyllysine; alternate mark. Y24 carries the post-translational modification Phosphotyrosine. S35 is subject to Phosphoserine. Residue K40 is modified to N6-succinyllysine. S49 bears the Phosphoserine mark. An O2-binding site is contributed by H58. Heme b is bound at residue H87. Residue S102 is modified to Phosphoserine. The residue at position 108 (T108) is a Phosphothreonine. Residues S124 and S131 each carry the phosphoserine modification. Phosphothreonine occurs at positions 134 and 137. Position 138 is a phosphoserine (S138).

This sequence belongs to the globin family. Heterotetramer of two alpha chains and two beta chains. In terms of tissue distribution, red blood cells.

Its function is as follows. Involved in oxygen transport from the lung to the various peripheral tissues. Hemopressin acts as an antagonist peptide of the cannabinoid receptor CNR1. Hemopressin-binding efficiently blocks cannabinoid receptor CNR1 and subsequent signaling. The protein is Hemoglobin subunit alpha (HBA) of Theropithecus gelada (Gelada baboon).